Reading from the N-terminus, the 307-residue chain is Glutaminase (307 aa).

Substrate is bound by residues Ser-66, Asn-117, Glu-161, Asn-168, Tyr-192, Tyr-243, and Val-261.

It belongs to the glutaminase family. Homotetramer.

It carries out the reaction L-glutamine + H2O = L-glutamate + NH4(+). The chain is Glutaminase from Serratia proteamaculans (strain 568).